Here is a 1199-residue protein sequence, read N- to C-terminus: Putative pyruvate-flavodoxin oxidoreductase (1199 aa).

2 consecutive 4Fe-4S ferredoxin-type domains span residues 681-710 and 737-766; these read EIPVWDPDVCVQCGKCVIVCPHAVIRGKVY and FTIQVAPEDCTGCGICVDVCPAKNKSQPRL. C690, C693, C696, C700, C746, C749, C752, C756, C820, C823, C848, and C1079 together coordinate [4Fe-4S] cluster.

This sequence belongs to the pyruvate:ferredoxin/flavodoxin oxidoreductase family. It depends on [4Fe-4S] cluster as a cofactor.

The enzyme catalyses oxidized [flavodoxin] + pyruvate + CoA + 2 H(+) = reduced [flavodoxin] + acetyl-CoA + CO2. Oxidoreductase required for the transfer of electrons from pyruvate to flavodoxin. This chain is Putative pyruvate-flavodoxin oxidoreductase (nifJ), found in Synechocystis sp. (strain ATCC 27184 / PCC 6803 / Kazusa).